The chain runs to 378 residues: Actin-related protein 2/3 complex subunit 1A (378 aa).

WD repeat units follow at residues 8–47 (RFAE…HWER), 53–92 (KHDQ…WVPT), 97–138 (RLNR…WVSK), 143–182 (RHES…VDTK), 203–242 (LSYS…PLAQ), 257–295 (ISEK…KAAS), and 331–375 (VHDN…QELG).

The protein belongs to the WD repeat ARPC1 family. Component of the Arp2/3 complex composed of ARP2, ARP3, ARPC1/p41-ARC, ARPC2/p34-ARC, ARPC3/p21-ARC, ARPC4/p20-ARC and ARPC5/p16-ARC. As to expression, expressed at low levels in all tissues with a relatively highest expression in inflorescences.

The protein resides in the cytoplasm. Its subcellular location is the cytoskeleton. Functions as a component of the Arp2/3 complex which is involved in regulation of actin polymerization and together with an activating nucleation-promoting factor (NPF) mediates the formation of branched actin networks. Arp2/3 complex plays a critical role in the control of cell morphogenesis via the modulation of cell polarity development. In Arabidopsis thaliana (Mouse-ear cress), this protein is Actin-related protein 2/3 complex subunit 1A (ARPC1A).